The sequence spans 197 residues: Large ribosomal subunit protein bL25 (197 aa).

Belongs to the bacterial ribosomal protein bL25 family. CTC subfamily. Part of the 50S ribosomal subunit; part of the 5S rRNA/L5/L18/L25 subcomplex. Contacts the 5S rRNA. Binds to the 5S rRNA independently of L5 and L18.

In terms of biological role, this is one of the proteins that binds to the 5S RNA in the ribosome where it forms part of the central protuberance. This Hydrogenobaculum sp. (strain Y04AAS1) protein is Large ribosomal subunit protein bL25.